We begin with the raw amino-acid sequence, 254 residues long: Probable transcriptional regulatory protein MAE_13580 (254 aa).

Belongs to the TACO1 family.

Its subcellular location is the cytoplasm. The polypeptide is Probable transcriptional regulatory protein MAE_13580 (Microcystis aeruginosa (strain NIES-843 / IAM M-2473)).